The primary structure comprises 215 residues: MRTGIIAQKVGMTSVFNNNGKRVPLTLVKVDDCQVVGHKIAEKHGYNALVIGIKDKKISRVTKPMKQVFANAKVSPKTKLKEFRISEDNFIDIAASLEVDHFTAGQFIDVTATTIGKGFAGSMKRHNFRGLEASHGVSISHRSHGSTGQRQDPGKVFKGKKMAGHMGCSQVTIQNLKIFAIDKEQGLIMIQGSIPGHKGSYISIKDAIKKISITA.

Q151 is modified (N5-methylglutamine).

Belongs to the universal ribosomal protein uL3 family. As to quaternary structure, part of the 50S ribosomal subunit. Forms a cluster with proteins L14 and L19. Methylated by PrmB.

Its function is as follows. One of the primary rRNA binding proteins, it binds directly near the 3'-end of the 23S rRNA, where it nucleates assembly of the 50S subunit. The chain is Large ribosomal subunit protein uL3 from Rickettsia bellii (strain OSU 85-389).